The chain runs to 147 residues: Ubiquitin-conjugating enzyme E2-16 kDa (147 aa).

The 147-residue stretch at 1-147 (MALKRINKEL…AREWTRKYAI (147 aa)) folds into the UBC core domain. Cys-107 (glycyl thioester intermediate) is an active-site residue.

Belongs to the ubiquitin-conjugating enzyme family.

It catalyses the reaction S-ubiquitinyl-[E1 ubiquitin-activating enzyme]-L-cysteine + [E2 ubiquitin-conjugating enzyme]-L-cysteine = [E1 ubiquitin-activating enzyme]-L-cysteine + S-ubiquitinyl-[E2 ubiquitin-conjugating enzyme]-L-cysteine.. The protein operates within protein modification; protein ubiquitination. Its function is as follows. Catalyzes the covalent attachment of ubiquitin to other proteins. This is Ubiquitin-conjugating enzyme E2-16 kDa (UBC1) from Pyricularia oryzae (strain 70-15 / ATCC MYA-4617 / FGSC 8958) (Rice blast fungus).